The sequence spans 277 residues: Large ribosomal subunit protein uL2c (277 aa).

Residues 224–257 (VMNPIDHPHGGGEGRAPIGRKKPLTPWGHPALGR) are disordered.

The protein belongs to the universal ribosomal protein uL2 family. As to quaternary structure, part of the 50S ribosomal subunit.

It is found in the plastid. Its subcellular location is the chloroplast. This is Large ribosomal subunit protein uL2c (rpl2) from Anthoceros angustus (Hornwort).